The chain runs to 1220 residues: MAIDVNKFESMQIALASPDKIRSWSYGEVKKPETINYRTLKPEKDGLFDERIFGPTKDYECACGKYKRIRYKGIVCDRCGVEVTSSKVRRERMGHIELAAPVTHIWYFKGIPSRMGLVLDMSPRSLEEIIYFASYVVIEPGDAPVEKKQMMTEREYRQLKKEYGAGFKAGMGAEAIKELLANVDLATEADELKRELQEATGQKRVRAVRRLDIIEAFLQSDNKPEWMVMEVIPVIPPDLRPMVQLEGGRFATSDLNDLYRRVINRNNRLKRLLDLNAPGIIVQNEKRMLQEAVDALIDNGRRGRPVAGPGNRPLKSLSHMLKGKQGRFRQNLLGKRVDYSGRSVIDVGPFLKMNQMGLPVPMAIELFRPFIMKELTTRKLAGNVKSAKRKIDKADGDVMDVLEDVIKEHPVLLNRAPTLHRLGIQAFEPVLVSGKAMRLHPLVTEAYNADFDGDQMAIHVPLSDEAQAEARLLMLAAGHILAPKDGKPIVAPSQDMVIGNYYLTTEEAGREGEGMIFSSVDEARIAFASKVVHYHTRVGIQTSSFPSEKPFTDEQRSKIMITSVGKLFFNEILPSDFPYINEPSEDNFKRVDDSFFIDAGENIHDYLADTSIVNPFKKGFLSDIIAEVYKRYKVTETSLLLDRMKDLGYDKSTESGLTVSMTDVLELEEKPAILEDAHSQVATVTKQFRRGLITDSERYQRVTEIWTKAKDIIQDKLIESFEPTNPIFMMQDSGARGNISNFVQLAGMRGLMAGPGGKIIELPVTANFREGLTVMEMFISTHGARKGMSDTALKTANSGYLTRRLVDVAQDVIVREFDNDSDRGVAVQAIMDGTSVVEPLYDRILGRYAMKSVFDPETDEKIVSRNEMIDEDVAKKIVNAGIKEVTIRSVFTSTTEHGVSVLDYGRNLASGEEVEVGEAVGTVAAQSIGEPGTQLTMRNFHTGGVAGGNDITQGLPRVQEIVEARIPKGRAEISEVTGTITVIEENPADRTKSVTIEGETDTRTYTLPLTTRMRFGEGDEIKRGEAINEGPIDPKELLAVTDTLTTESYMLTEIQKVYRLQGIEVSDKHIEVMIRQMLRKIRVMDPGQTDLLPGTLMDIADFKRANEPALFEGLVPATARPVLLGITKAALETNSFLSAASFQETTRVLTDAAIRGKNDPLVGLKENVIIGKIIPAGTGMAEYRKIKSKVVGDVIAQPESESEEASDIPKLDDVAKTFDN.

Zn(2+)-binding residues include Cys61, Cys63, Cys76, and Cys79. Mg(2+)-binding residues include Asp450, Asp452, and Asp454. Residues Gln1197–Asn1220 form a disordered region. The segment covering Asp1207 to Asn1220 has biased composition (basic and acidic residues).

The protein belongs to the RNA polymerase beta' chain family. In terms of assembly, the RNAP catalytic core consists of 2 alpha, 1 beta, 1 beta' and 1 omega subunit. When a sigma factor is associated with the core the holoenzyme is formed, which can initiate transcription. Mg(2+) serves as cofactor. The cofactor is Zn(2+).

It catalyses the reaction RNA(n) + a ribonucleoside 5'-triphosphate = RNA(n+1) + diphosphate. Functionally, DNA-dependent RNA polymerase catalyzes the transcription of DNA into RNA using the four ribonucleoside triphosphates as substrates. The chain is DNA-directed RNA polymerase subunit beta' from Leuconostoc mesenteroides subsp. mesenteroides (strain ATCC 8293 / DSM 20343 / BCRC 11652 / CCM 1803 / JCM 6124 / NCDO 523 / NBRC 100496 / NCIMB 8023 / NCTC 12954 / NRRL B-1118 / 37Y).